The primary structure comprises 370 residues: 3-dehydroquinate synthase (370 aa).

Residues 108-112 (GVVGD), 132-133 (TT), Lys145, and Lys154 contribute to the NAD(+) site. The Zn(2+) site is built by Glu187, His250, and His268.

It belongs to the sugar phosphate cyclases superfamily. Dehydroquinate synthase family. It depends on Co(2+) as a cofactor. Requires Zn(2+) as cofactor. NAD(+) is required as a cofactor.

The protein localises to the cytoplasm. The enzyme catalyses 7-phospho-2-dehydro-3-deoxy-D-arabino-heptonate = 3-dehydroquinate + phosphate. Its pathway is metabolic intermediate biosynthesis; chorismate biosynthesis; chorismate from D-erythrose 4-phosphate and phosphoenolpyruvate: step 2/7. In terms of biological role, catalyzes the conversion of 3-deoxy-D-arabino-heptulosonate 7-phosphate (DAHP) to dehydroquinate (DHQ). This chain is 3-dehydroquinate synthase, found in Caulobacter vibrioides (strain NA1000 / CB15N) (Caulobacter crescentus).